We begin with the raw amino-acid sequence, 347 residues long: tRNA N6-adenosine threonylcarbamoyltransferase (347 aa).

Fe cation contacts are provided by His-111 and His-115. Residues Leu-134–Gly-138, Asp-167, Gly-180, and Asn-277 each bind substrate. Asp-305 is a binding site for Fe cation.

The protein belongs to the KAE1 / TsaD family. Fe(2+) serves as cofactor.

It localises to the cytoplasm. It carries out the reaction L-threonylcarbamoyladenylate + adenosine(37) in tRNA = N(6)-L-threonylcarbamoyladenosine(37) in tRNA + AMP + H(+). Functionally, required for the formation of a threonylcarbamoyl group on adenosine at position 37 (t(6)A37) in tRNAs that read codons beginning with adenine. Is involved in the transfer of the threonylcarbamoyl moiety of threonylcarbamoyl-AMP (TC-AMP) to the N6 group of A37, together with TsaE and TsaB. TsaD likely plays a direct catalytic role in this reaction. The sequence is that of tRNA N6-adenosine threonylcarbamoyltransferase from Ralstonia pickettii (strain 12J).